A 176-amino-acid polypeptide reads, in one-letter code: Protein MAL2 (176 aa).

The Cytoplasmic portion of the chain corresponds to 1–34 (MSAGGASVPPPPNPAVSFPVPRVTLPAGPDILRT). The MARVEL domain maps to 31–175 (ILRTYSGAFV…SLGLALRRWR (145 aa)). A helical transmembrane segment spans residues 35–55 (YSGAFVCLEILFGGLVWILVA). The Lumenal segment spans residues 56–66 (SSNVPLPLLQG). The helical transmembrane segment at 67–87 (WVMFVSVTAFFFSLLFLGLFL) threads the bilayer. Over 88–102 (SGMVTQIDANWNFLD) the chain is Cytoplasmic. Residues 103–123 (FAYHFTVFVFYFGAFLLEAAA) form a helical membrane-spanning segment. Residues 124-149 (TSLHDLHYNITMTGQPLLNDNQYNIN) lie on the Lumenal side of the membrane. N132 carries an N-linked (GlcNAc...) asparagine glycan. The chain crosses the membrane as a helical span at residues 150–170 (VAASIFAFMTTACYGCSLGLA). Over 171 to 176 (LRRWRP) the chain is Cytoplasmic.

It belongs to the MAL family. In terms of assembly, interacts with TPD52L2.

The protein localises to the cell membrane. It localises to the apical cell membrane. Its function is as follows. Member of the machinery of polarized transport. Required for the indirect transcytotic route at the step of the egress of the transcytosing cargo from perinuclear endosomes in order for it to travel to the apical surface via a raft-dependent pathway. The polypeptide is Protein MAL2 (MAL2) (Pongo abelii (Sumatran orangutan)).